A 444-amino-acid polypeptide reads, in one-letter code: Protein CPn_0808/CP_1063/CPj0808/CpB0837 (444 aa).

Residues 1-13 are compositionally biased toward polar residues; it reads MTSGVSGSSSQDP. Residues 1–124 are disordered; the sequence is MTSGVSGSSS…NNYDSPSLPT (124 aa). A compositionally biased stretch (low complexity) spans 15–24; the sequence is LAAQLAQSSQ. The segment covering 25–42 has biased composition (polar residues); it reads KAGNAQSGHDTKNVTKQG. Over residues 77-86 the composition is skewed to basic and acidic residues; that stretch reads SKGEKSEKSG. Residues 88–103 are compositionally biased toward low complexity; sequence SKSSTSVASASETATA. Residues 113 to 124 are compositionally biased toward polar residues; that stretch reads RQNNYDSPSLPT.

This sequence belongs to the chlamydial CPn_0808/CT_579/TC_0868 family.

The chain is Protein CPn_0808/CP_1063/CPj0808/CpB0837 from Chlamydia pneumoniae (Chlamydophila pneumoniae).